The primary structure comprises 303 residues: Diaminopimelate epimerase (303 aa).

Substrate contacts are provided by asparagine 15 and asparagine 72. The Proton donor role is filled by cysteine 81. Substrate is bound by residues 82–83 (GN), asparagine 169, asparagine 202, and 220–221 (ER). Cysteine 229 functions as the Proton acceptor in the catalytic mechanism. 230–231 (GT) serves as a coordination point for substrate.

This sequence belongs to the diaminopimelate epimerase family. As to quaternary structure, homodimer.

The protein resides in the cytoplasm. It carries out the reaction (2S,6S)-2,6-diaminopimelate = meso-2,6-diaminopimelate. It participates in amino-acid biosynthesis; L-lysine biosynthesis via DAP pathway; DL-2,6-diaminopimelate from LL-2,6-diaminopimelate: step 1/1. Functionally, catalyzes the stereoinversion of LL-2,6-diaminopimelate (L,L-DAP) to meso-diaminopimelate (meso-DAP), a precursor of L-lysine and an essential component of the bacterial peptidoglycan. This chain is Diaminopimelate epimerase, found in Prochlorococcus marinus (strain MIT 9313).